A 273-amino-acid chain; its full sequence is Dormancy associated translation inhibitor (273 aa).

As to quaternary structure, interacts with human TLR2.

In terms of biological role, involved in translation regulation. Can also stimulate macrophages and peripheral blood mononuclear cells (PBMC) to secrete important cytokines that may be significant in granuloma formation and its maintenance. Increases secretion of IFN-gamma, TNF-alpha, IL-1 beta and IL-8 through human Toll-like receptor 2 (TLR2) signaling pathway. The chain is Dormancy associated translation inhibitor from Mycobacterium tuberculosis (strain CDC 1551 / Oshkosh).